A 62-amino-acid chain; its full sequence is UPF0434 protein Avi_4243 (62 aa).

Belongs to the UPF0434 family.

The sequence is that of UPF0434 protein Avi_4243 from Allorhizobium ampelinum (strain ATCC BAA-846 / DSM 112012 / S4) (Agrobacterium vitis (strain S4)).